The primary structure comprises 72 residues: uncharacterized protein (72 aa).

Positions 1-17 (MSLGLAIAVGIVLGVVA) are cleaved as a signal peptide.

This is an uncharacterized protein from Schizosaccharomyces pombe (strain 972 / ATCC 24843) (Fission yeast).